Reading from the N-terminus, the 302-residue chain is MRPVDKKPVDRKIERETRYLRRDPAPSRWSYRYQRLMLTPAFRAGVRLGTPVIIIALAVAVVFGRADSRDWIMGHYNAAIAAVTQRPEFMVGSFAITGASPDLALAIEGLVDIPFPISTFNLDLQDLRTNIAALSPVRNVNVQAGGGVLQIVIEERQPVAVWRHVDGLRLMDGEGIATGMILNRADRPELPLIAGDGAQAAIPEAMELFRIASPLGARVLALVRMGERRWDLVLDREQIVQLPAVDAVAALQRVIAQEEAQQLLSRDVAVVDMRNDARQTIRMTQRARDALRSMPGRSAGRG.

The Cytoplasmic portion of the chain corresponds to 1–43 (MRPVDKKPVDRKIERETRYLRRDPAPSRWSYRYQRLMLTPAFR). The chain crosses the membrane as a helical span at residues 44–64 (AGVRLGTPVIIIALAVAVVFG). Over 65-302 (RADSRDWIMG…SMPGRSAGRG (238 aa)) the chain is Periplasmic. A POTRA domain is found at 89–156 (FMVGSFAITG…GVLQIVIEER (68 aa)).

It belongs to the FtsQ/DivIB family. FtsQ subfamily.

The protein localises to the cell inner membrane. In terms of biological role, essential cell division protein. The chain is Cell division protein FtsQ from Ketogulonicigenium vulgare (strain Y25).